We begin with the raw amino-acid sequence, 194 residues long: dCTP deaminase (194 aa).

DCTP contacts are provided by residues 110–115, Asp128, 136–138, Tyr171, Lys178, and Gln182; these read RSSLAR and VLE. Glu138 acts as the Proton donor/acceptor in catalysis.

The protein belongs to the dCTP deaminase family. As to quaternary structure, homotrimer.

The enzyme catalyses dCTP + H2O + H(+) = dUTP + NH4(+). It participates in pyrimidine metabolism; dUMP biosynthesis; dUMP from dCTP (dUTP route): step 1/2. Catalyzes the deamination of dCTP to dUTP. This is dCTP deaminase from Glaesserella parasuis serovar 5 (strain SH0165) (Haemophilus parasuis).